We begin with the raw amino-acid sequence, 101 residues long: Eukaryotic translation initiation factor 4E-binding protein 3 (101 aa).

Residues 1-28 (MSSSTSCPIPGCRDQLPDGYSTTPGGTL) are disordered. The YXXXXLphi motif signature appears at 40 to 46 (YDRKFLL). The TOS motif motif lies at 97 to 101 (FEMDM).

Belongs to the eIF4E-binding protein family. As to quaternary structure, interacts with EIF4E. Interacts with RPA2 (via N-terminus); the interaction enhances EIF4EBP3-mediated inhibition of EIF4E-mediated mRNA nuclear export. In terms of processing, phosphorylated.

The protein localises to the cytoplasm. The protein resides in the nucleus. Repressor of translation initiation that regulates EIF4E activity by preventing its assembly into the eIF4F complex: the hypophosphorylated form competes with EIF4G1/EIF4G3 and strongly binds to EIF4E, leading to repression of translation. In contrast, the hyperphosphorylated form dissociates from EIF4E, allowing interaction between EIF4G1/EIF4G3 and EIF4E, leading to initiation of translation. Inhibits EIF4E-mediated mRNA nuclear export. In Mus musculus (Mouse), this protein is Eukaryotic translation initiation factor 4E-binding protein 3 (Eif4ebp3).